Here is a 185-residue protein sequence, read N- to C-terminus: Ribosome-recycling factor (185 aa).

It belongs to the RRF family.

It localises to the cytoplasm. Responsible for the release of ribosomes from messenger RNA at the termination of protein biosynthesis. May increase the efficiency of translation by recycling ribosomes from one round of translation to another. This Pseudomonas paraeruginosa (strain DSM 24068 / PA7) (Pseudomonas aeruginosa (strain PA7)) protein is Ribosome-recycling factor.